An 84-amino-acid chain; its full sequence is U21-theraphotoxin-Cg1c (84 aa).

Positions 1–21 (MKVSVLITLAVLGVMFLLTSA) are cleaved as a signal peptide. A propeptide spanning residues 22–47 (EERGSDQMDSPAWLKSMERIFQSEER) is cleaved from the precursor. Disulfide bonds link Cys49–Cys63, Cys56–Cys68, and Cys62–Cys76.

The protein belongs to the neurotoxin 10 (Hwtx-1) family. 05 (F4a) subfamily. As to expression, expressed by the venom gland.

The protein localises to the secreted. Functionally, probable ion channel inhibitor. This chain is U21-theraphotoxin-Cg1c, found in Chilobrachys guangxiensis (Chinese earth tiger tarantula).